A 232-amino-acid polypeptide reads, in one-letter code: Large ribosomal subunit protein uL1 (232 aa).

The protein belongs to the universal ribosomal protein uL1 family. As to quaternary structure, part of the 50S ribosomal subunit.

Functionally, binds directly to 23S rRNA. The L1 stalk is quite mobile in the ribosome, and is involved in E site tRNA release. In terms of biological role, protein L1 is also a translational repressor protein, it controls the translation of the L11 operon by binding to its mRNA. This Clostridium novyi (strain NT) protein is Large ribosomal subunit protein uL1.